The sequence spans 81 residues: Photosystem I iron-sulfur center (81 aa).

2 consecutive 4Fe-4S ferredoxin-type domains span residues 2–31 (SHSVRVYDTCIGCTQCVRACPCDVLEMVPW) and 39–68 (IASAPRAEDCIGCKRCETACPTDFLSVRVY). [4Fe-4S] cluster-binding residues include Cys-11, Cys-14, Cys-17, Cys-21, Cys-48, Cys-51, Cys-54, and Cys-58.

The eukaryotic PSI reaction center is composed of at least 11 subunits. [4Fe-4S] cluster is required as a cofactor.

The protein localises to the plastid. It is found in the chloroplast thylakoid membrane. It catalyses the reaction reduced [plastocyanin] + hnu + oxidized [2Fe-2S]-[ferredoxin] = oxidized [plastocyanin] + reduced [2Fe-2S]-[ferredoxin]. Apoprotein for the two 4Fe-4S centers FA and FB of photosystem I (PSI); essential for photochemical activity. FB is the terminal electron acceptor of PSI, donating electrons to ferredoxin. The C-terminus interacts with PsaA/B/D and helps assemble the protein into the PSI complex. Required for binding of PsaD and PsaE to PSI. PSI is a plastocyanin/cytochrome c6-ferredoxin oxidoreductase, converting photonic excitation into a charge separation, which transfers an electron from the donor P700 chlorophyll pair to the spectroscopically characterized acceptors A0, A1, FX, FA and FB in turn. The sequence is that of Photosystem I iron-sulfur center from Emiliania huxleyi (Coccolithophore).